We begin with the raw amino-acid sequence, 339 residues long: Protein-arginine kinase (339 aa).

The Phosphagen kinase C-terminal domain occupies 14 to 242 (IVINSNISLS…LNVISEEKKF (229 aa)). ATP contacts are provided by residues 17–21 (NSNIS), 164–168 (RASVN), and 195–200 (KGLYEE).

The protein belongs to the ATP:guanido phosphotransferase family.

The enzyme catalyses L-arginyl-[protein] + ATP = N(omega)-phospho-L-arginyl-[protein] + ADP + H(+). Catalyzes the specific phosphorylation of arginine residues in proteins. This Clostridium botulinum (strain Eklund 17B / Type B) protein is Protein-arginine kinase.